The sequence spans 162 residues: Hydrogenase-2 operon protein HybE (162 aa).

This sequence belongs to the HupJ family.

This Escherichia coli O157:H7 protein is Hydrogenase-2 operon protein HybE (hybE).